The primary structure comprises 71 residues: Small ribosomal subunit protein bS21 (71 aa).

It belongs to the bacterial ribosomal protein bS21 family.

In Cellvibrio japonicus (strain Ueda107) (Pseudomonas fluorescens subsp. cellulosa), this protein is Small ribosomal subunit protein bS21.